Here is a 342-residue protein sequence, read N- to C-terminus: tRNA N6-adenosine threonylcarbamoyltransferase (342 aa).

Fe cation-binding residues include histidine 111 and histidine 115. Residues 134–138 (LVSGG), aspartate 167, glycine 180, aspartate 184, and asparagine 273 each bind substrate. Aspartate 298 serves as a coordination point for Fe cation.

It belongs to the KAE1 / TsaD family. Fe(2+) is required as a cofactor.

It localises to the cytoplasm. The catalysed reaction is L-threonylcarbamoyladenylate + adenosine(37) in tRNA = N(6)-L-threonylcarbamoyladenosine(37) in tRNA + AMP + H(+). Functionally, required for the formation of a threonylcarbamoyl group on adenosine at position 37 (t(6)A37) in tRNAs that read codons beginning with adenine. Is involved in the transfer of the threonylcarbamoyl moiety of threonylcarbamoyl-AMP (TC-AMP) to the N6 group of A37, together with TsaE and TsaB. TsaD likely plays a direct catalytic role in this reaction. The protein is tRNA N6-adenosine threonylcarbamoyltransferase of Gloeobacter violaceus (strain ATCC 29082 / PCC 7421).